The following is a 275-amino-acid chain: Probable ribosomal RNA small subunit methyltransferase A (275 aa).

5 residues coordinate S-adenosyl-L-methionine: leucine 13, glycine 38, glutamate 59, aspartate 84, and asparagine 101.

Belongs to the class I-like SAM-binding methyltransferase superfamily. rRNA adenine N(6)-methyltransferase family. RsmA subfamily.

The protein resides in the cytoplasm. In terms of biological role, specifically dimethylates two adjacent adenosines in the loop of a conserved hairpin near the 3'-end of 16S rRNA in the 30S particle. May play a critical role in biogenesis of 30S subunits. The protein is Probable ribosomal RNA small subunit methyltransferase A of Methanocaldococcus jannaschii (strain ATCC 43067 / DSM 2661 / JAL-1 / JCM 10045 / NBRC 100440) (Methanococcus jannaschii).